A 196-amino-acid chain; its full sequence is Peroxynitrite isomerase (196 aa).

The tract at residues 1–29 is disordered; sequence MSDENPLQPPWLNAPPVDPYPYEESHDLR. Pro residues predominate over residues 7–19; the sequence is LQPPWLNAPPVDP. Positions 46–52 match the GXWXGXG motif; that stretch reads GVWRGRG. Histidine 186 is a heme b binding site.

It belongs to the nitrobindin family. In terms of assembly, homodimer. The cofactor is heme b.

The catalysed reaction is peroxynitrite = nitrate. The protein operates within nitrogen metabolism. Its function is as follows. Heme-binding protein able to scavenge peroxynitrite and to protect free L-tyrosine against peroxynitrite-mediated nitration, by acting as a peroxynitrite isomerase that converts peroxynitrite to nitrate. Therefore, this protein likely plays a role in peroxynitrite sensing and in the detoxification of reactive nitrogen and oxygen species (RNS and ROS, respectively). Is able to bind nitric oxide (NO) in vitro, but may act as a sensor of peroxynitrite levels in vivo. This Salinispora arenicola (strain CNS-205) protein is Peroxynitrite isomerase.